The primary structure comprises 695 residues: MNQSGTNQSSLSDSNQAGINQPSTNSLGMNQMDMNQGSASLYEMNQVDMKQPSMSQAGMRQSGTNLPDINQPDMKQPDTWQLGRSQPGMLQQELSQLVLSKAGISQPDPSQPGPSQSGPSQSRMRQIGTNQSGMSQPVMQQLDSQSGGSQPSMRQVGTSQLGTSQIGMSQPGTWQTGLSQPVLRQPNMSPPGMWQPGVQQPGISQQVPSHPDMSQPGMSQQVPSQPGIRQPDTSQSCKNQTDMSQPDANQSSLSDSNQTGIIQPSPSLLGMNQMDMNQWSASLYEMNQVDMKQPSMSQAGMRQSGTNLPDINQPGMKQPGTWQLGRSQPGMWPQSLSELVLSEASISQPGPPQRAPSQSGPRQSSTSQAGTNQSGISQPVMWQLDMRQSGGSQPSMRQVGTSQSGTSQIGMSQPGTWQTGLSQPVPRQPNKSPPGMWQRGMWQPGMSQQVPSQLGMRQPGTSQSSKNQTGMSHPGRGQPGIWEPGPSQPGLSQQDLNQLVLSQPGLSQPGRSQPSVSQMGMRQTSMDYFQIRHAEAGDCPEILRLIKELAACENMLDAMELTAADLLRDGFGDNPLFYCLIAEVNDQQKPSGKLTVGFAMYYFTYDSWTGKVLYLEDFYVTQAYQGLGIGAEMLKRLSQIAITTQCNCMHFLVVIWNQASINYYTSRGALDLSSEEGWHLFRFNREELLDMAWEE.

Composition is skewed to polar residues over residues 1-39, 52-68, and 78-98; these read MNQS…QGSA, PSMS…NLPD, and DTWQ…SQLV. 4 disordered regions span residues 1 to 274, 290 to 332, 344 to 375, and 387 to 493; these read MNQS…MNQM, DMKQ…PGMW, ASIS…NQSG, and RQSG…GLSQ. A compositionally biased stretch (low complexity) spans 105–122; it reads SQPDPSQPGPSQSGPSQS. Composition is skewed to polar residues over residues 123-179, 197-208, 231-266, 294-310, 355-375, 389-422, and 459-471; these read RMRQ…TGLS, GVQQPGISQQVP, PDTS…QPSP, PSMS…NLPD, APSQ…NQSG, SGGS…TGLS, and PGTS…QTGM. An N-acetyltransferase domain is found at 529–695; it reads FQIRHAEAGD…EELLDMAWEE (167 aa). Residue 552-553 coordinates substrate; the sequence is CE. Acetyl-CoA-binding positions include 618–620 and 626–631; these read FYV and GLGIGA. Substrate-binding positions include 650-652 and glutamate 676; that span reads HFL.

The protein belongs to the acetyltransferase family.

The sequence is that of Spermidine/spermine N(1)-acetyltransferase-like protein 1 (SATL1) from Homo sapiens (Human).